A 252-amino-acid polypeptide reads, in one-letter code: Putative endonuclease C1F12.06c (252 aa).

Residues aspartate 43 and aspartate 114 each coordinate Mg(2+).

It belongs to the endonuclease V family.

The protein resides in the cytoplasm. Its subcellular location is the nucleus. This chain is Putative endonuclease C1F12.06c, found in Schizosaccharomyces pombe (strain 972 / ATCC 24843) (Fission yeast).